The following is a 161-amino-acid chain: Allophycocyanin alpha subunit (161 aa).

Residue cysteine 81 participates in (2R,3E)-phycocyanobilin binding.

This sequence belongs to the phycobiliprotein family. Heterodimer of an alpha and a beta chain. Contains one covalently linked phycocyanobilin chromophore. The chromophore on position 81 is added by the phycocyanobilin lyase CpcUS.

It localises to the cellular thylakoid membrane. Its function is as follows. Light-harvesting photosynthetic bile pigment-protein from the phycobiliprotein complex. Allophycocyanin has a maximum absorption at approximately 650 nanometers. The protein is Allophycocyanin alpha subunit (apcA) of Picosynechococcus sp. (strain ATCC 27264 / PCC 7002 / PR-6) (Agmenellum quadruplicatum).